The following is a 248-amino-acid chain: mRNA-decapping protein OPG122 (248 aa).

Positions 45–227 (HKRVSVSAIL…IAKYALDTAK (183 aa)) constitute a Nudix hydrolase domain. Residues 126–147 (GIPKRGENVPECLSREIKEEVN) carry the Nudix box motif. Glutamate 132 contributes to the Mg(2+) binding site. The active-site Nucleophile is glutamate 141. Glutamate 145 provides a ligand contact to Mn(2+). Aspartate 167 contributes to the Mg(2+) binding site.

The protein belongs to the Nudix hydrolase family. Requires Mg(2+) as cofactor. Mn(2+) serves as cofactor.

Its subcellular location is the host mitochondrion. Functionally, decapping enzyme that remove the protective 5'-cap from both host and viral mRNAs to commit transcripts for decay by the cellular exonuclease XRN1. Preferentially targets spliced mRNAs and since all viral genes are intronless, it preferentially targets host over viral transcripts. Acceleration of the turnover of cellular transcripts promotes the shutoff of host protein synthesis and therefore diminish the magnitude of antiviral response. The protein is mRNA-decapping protein OPG122 (OPG122) of Bos taurus (Bovine).